The sequence spans 966 residues: Mitogen-activated protein kinase kinase kinase 13 (966 aa).

Disordered regions lie at residues 1–22, 30–49, and 90–114; these read MANFQEHLSCSSSPHLPFSESK, ELTAMGNHPSPKLLEDQQEK, and HDESETAVSQGNSNTVDGESTSGTE. Polar residues predominate over residues 95–113; that stretch reads TAVSQGNSNTVDGESTSGT. In terms of domain architecture, Protein kinase spans 168 to 409; it reads ISELQWLGSG…FRQTLMHLDI (242 aa). ATP contacts are provided by residues 174-182 and lysine 195; that span reads LGSGAQGAV. Aspartate 279 serves as the catalytic Proton acceptor. Leucine-zipper stretches follow at residues 433–454 and 486–507; these read VKKHFEKIKSEGTCIHRLDEEL and LSAIMLQLEMREKELIKREQAV. 4 disordered regions span residues 534-599, 611-655, 744-834, and 846-908; these read KRKG…RGSH, AQEN…HHPR, DIPS…RRQR, and STFS…GLSD. Residues 567–581 are compositionally biased toward low complexity; it reads SPLSGSPKMSTSSSK. Positions 582-594 are enriched in basic residues; that stretch reads SRYRSKPRHRRGN. 2 stretches are compositionally biased toward polar residues: residues 611–629 and 785–795; these read AQENSPHPTYLHQAQSQYP and RSESSLGTSHL. The segment covering 814–827 has biased composition (acidic residues); sequence DSSEEEEGEVDSEV. Residues 815–828 form an acidic region; sequence SSEEEEGEVDSEVE. Residues 846-855 show a composition bias toward polar residues; the sequence is STFSSENFSV. Positions 873–887 are enriched in basic and acidic residues; the sequence is LADKLEDRLAEKLDD.

This sequence belongs to the protein kinase superfamily. STE Ser/Thr protein kinase family. MAP kinase kinase kinase subfamily. Homodimer; forms dimers through the leucine-zipper motif. Interacts with the C-terminus of MAPK8IP1 through the kinase catalytic domain. Binds PRDX3. Associates with the IKK complex through the kinase domain. It depends on Mg(2+) as a cofactor. Post-translationally, autophosphorylated on serine and threonine residues. Expressed in the adult brain, liver, placenta and pancreas, with expression strongest in the pancreas.

Its subcellular location is the cytoplasm. The protein localises to the membrane. The catalysed reaction is L-seryl-[protein] + ATP = O-phospho-L-seryl-[protein] + ADP + H(+). It carries out the reaction L-threonyl-[protein] + ATP = O-phospho-L-threonyl-[protein] + ADP + H(+). Its activity is regulated as follows. Activated by autophosphorylation and homodimerization. Activates the JUN N-terminal pathway through activation of the MAP kinase kinase MAP2K7. Acts synergistically with PRDX3 to regulate the activation of NF-kappa-B in the cytosol. This activation is kinase-dependent and involves activating the IKK complex, the IKBKB-containing complex that phosphorylates inhibitors of NF-kappa-B. In Homo sapiens (Human), this protein is Mitogen-activated protein kinase kinase kinase 13.